Here is a 347-residue protein sequence, read N- to C-terminus: Dihydroorotase (347 aa).

Zn(2+) is bound by residues His-17 and His-19. Residues 19–21 (HLR) and Asn-45 contribute to the substrate site. Zn(2+) is bound by residues Lys-103, His-140, and His-178. The residue at position 103 (Lys-103) is an N6-carboxylysine. Residue His-140 coordinates substrate. Leu-223 lines the substrate pocket. Asp-251 provides a ligand contact to Zn(2+). Asp-251 is an active-site residue. Residues His-255 and Ala-267 each coordinate substrate.

It belongs to the metallo-dependent hydrolases superfamily. DHOase family. Class II DHOase subfamily. Homodimer. The cofactor is Zn(2+).

The enzyme catalyses (S)-dihydroorotate + H2O = N-carbamoyl-L-aspartate + H(+). It functions in the pathway pyrimidine metabolism; UMP biosynthesis via de novo pathway; (S)-dihydroorotate from bicarbonate: step 3/3. In terms of biological role, catalyzes the reversible cyclization of carbamoyl aspartate to dihydroorotate. The protein is Dihydroorotase of Pectobacterium carotovorum subsp. carotovorum (strain PC1).